Here is a 281-residue protein sequence, read N- to C-terminus: Energy-coupling factor transporter ATP-binding protein EcfA1 (281 aa).

Residues 7 to 242 (IAAEDITFRY…NQDLIKIGLD (236 aa)) form the ABC transporter domain. Residue 42-49 (GHNGSGKS) participates in ATP binding.

The protein belongs to the ABC transporter superfamily. Energy-coupling factor EcfA family. As to quaternary structure, forms a stable energy-coupling factor (ECF) transporter complex composed of 2 membrane-embedded substrate-binding proteins (S component), 2 ATP-binding proteins (A component) and 2 transmembrane proteins (T component).

It localises to the cell membrane. In terms of biological role, ATP-binding (A) component of a common energy-coupling factor (ECF) ABC-transporter complex. Unlike classic ABC transporters this ECF transporter provides the energy necessary to transport a number of different substrates. This is Energy-coupling factor transporter ATP-binding protein EcfA1 from Bacillus licheniformis (strain ATCC 14580 / DSM 13 / JCM 2505 / CCUG 7422 / NBRC 12200 / NCIMB 9375 / NCTC 10341 / NRRL NRS-1264 / Gibson 46).